The primary structure comprises 176 residues: Inner membrane-spanning protein YciB (176 aa).

5 consecutive transmembrane segments (helical) span residues 24 to 44 (TATA…AFRH), 49 to 69 (PMLW…LVLH), 76 to 96 (WKPT…QLAF), 119 to 139 (LSVV…FVAY), and 149 to 169 (FKLF…SLWL).

Belongs to the YciB family.

It is found in the cell inner membrane. Its function is as follows. Plays a role in cell envelope biogenesis, maintenance of cell envelope integrity and membrane homeostasis. In Paraburkholderia phytofirmans (strain DSM 17436 / LMG 22146 / PsJN) (Burkholderia phytofirmans), this protein is Inner membrane-spanning protein YciB.